A 1117-amino-acid chain; its full sequence is DNA polymerase II large subunit (1117 aa).

A compositionally biased stretch (basic and acidic residues) spans 279-294; sequence STKEEEKKKEESSENK. Residues 279 to 299 are disordered; that stretch reads STKEEEKKKEESSENKPKKKA.

The protein belongs to the archaeal DNA polymerase II family. As to quaternary structure, heterodimer of a large subunit and a small subunit.

It carries out the reaction DNA(n) + a 2'-deoxyribonucleoside 5'-triphosphate = DNA(n+1) + diphosphate. The enzyme catalyses Exonucleolytic cleavage in the 3'- to 5'-direction to yield nucleoside 5'-phosphates.. In terms of biological role, possesses two activities: a DNA synthesis (polymerase) and an exonucleolytic activity that degrades single-stranded DNA in the 3'- to 5'-direction. Has a template-primer preference which is characteristic of a replicative DNA polymerase. The protein is DNA polymerase II large subunit of Methanosphaera stadtmanae (strain ATCC 43021 / DSM 3091 / JCM 11832 / MCB-3).